Reading from the N-terminus, the 428-residue chain is Enolase (428 aa).

Residue glutamine 173 participates in (2R)-2-phosphoglycerate binding. Residue glutamate 217 is the Proton donor of the active site. The Mg(2+) site is built by aspartate 253, glutamate 294, and aspartate 320. (2R)-2-phosphoglycerate contacts are provided by lysine 345, arginine 374, serine 375, and lysine 396. Lysine 345 serves as the catalytic Proton acceptor.

It belongs to the enolase family. Mg(2+) is required as a cofactor.

The protein resides in the cytoplasm. It is found in the secreted. Its subcellular location is the cell surface. It catalyses the reaction (2R)-2-phosphoglycerate = phosphoenolpyruvate + H2O. Its pathway is carbohydrate degradation; glycolysis; pyruvate from D-glyceraldehyde 3-phosphate: step 4/5. Catalyzes the reversible conversion of 2-phosphoglycerate (2-PG) into phosphoenolpyruvate (PEP). It is essential for the degradation of carbohydrates via glycolysis. In Methanosarcina barkeri (strain Fusaro / DSM 804), this protein is Enolase.